A 253-amino-acid chain; its full sequence is MICOS complex subunit mic25-b (253 aa).

A lipid anchor (N-myristoyl glycine) is attached at glycine 2. The disordered stretch occupies residues 38 to 82 (KDQSTWAASGAASGSATVPSKVGSSASHPAAASKDGAHKPTAAGV). Residues 44-53 (AASGAASGSA) show a composition bias toward low complexity. Residues 87 to 116 (AEEDLYRRYEREQTLIQEELARLAKREKDA) are a coiled coil. The CHCH domain maps to 206–248 (DPVCMDLQSNILKCYAENKQERLNCSDLAKEYQKCVSAAQKNL). Short sequence motifs (cx9C motif) lie at residues 209 to 219 (CMDLQSNILKC) and 230 to 240 (CSDLAKEYQKC). Intrachain disulfides connect cysteine 209/cysteine 240 and cysteine 219/cysteine 230.

It belongs to the MICOS complex subunit Mic19 family. Metazoan Mic25 subfamily. In terms of assembly, component of the mitochondrial contact site and cristae organizing system (MICOS) complex (also known as MINOS or MitOS complex).

It is found in the mitochondrion inner membrane. Its function is as follows. Component of the MICOS complex, a large protein complex of the mitochondrial inner membrane that plays crucial roles in the maintenance of crista junctions, inner membrane architecture, and formation of contact sites to the outer membrane. The sequence is that of MICOS complex subunit mic25-b (chchd6-b) from Xenopus laevis (African clawed frog).